A 115-amino-acid chain; its full sequence is NAD(P)H-quinone oxidoreductase subunit M (115 aa).

This sequence belongs to the complex I NdhM subunit family. As to quaternary structure, NDH-1 can be composed of about 15 different subunits; different subcomplexes with different compositions have been identified which probably have different functions.

The protein resides in the cellular thylakoid membrane. The enzyme catalyses a plastoquinone + NADH + (n+1) H(+)(in) = a plastoquinol + NAD(+) + n H(+)(out). It catalyses the reaction a plastoquinone + NADPH + (n+1) H(+)(in) = a plastoquinol + NADP(+) + n H(+)(out). In terms of biological role, NDH-1 shuttles electrons from an unknown electron donor, via FMN and iron-sulfur (Fe-S) centers, to quinones in the respiratory and/or the photosynthetic chain. The immediate electron acceptor for the enzyme in this species is believed to be plastoquinone. Couples the redox reaction to proton translocation, and thus conserves the redox energy in a proton gradient. Cyanobacterial NDH-1 also plays a role in inorganic carbon-concentration. This chain is NAD(P)H-quinone oxidoreductase subunit M, found in Parasynechococcus marenigrum (strain WH8102).